The sequence spans 185 residues: Elongation factor P (185 aa).

It belongs to the elongation factor P family.

It localises to the cytoplasm. The protein operates within protein biosynthesis; polypeptide chain elongation. In terms of biological role, involved in peptide bond synthesis. Stimulates efficient translation and peptide-bond synthesis on native or reconstituted 70S ribosomes in vitro. Probably functions indirectly by altering the affinity of the ribosome for aminoacyl-tRNA, thus increasing their reactivity as acceptors for peptidyl transferase. The sequence is that of Elongation factor P from Microcystis aeruginosa (strain NIES-843 / IAM M-2473).